Here is a 355-residue protein sequence, read N- to C-terminus: Peptide chain release factor 1 (355 aa).

N5-methylglutamine is present on glutamine 233.

Belongs to the prokaryotic/mitochondrial release factor family. Post-translationally, methylated by PrmC. Methylation increases the termination efficiency of RF1.

The protein localises to the cytoplasm. Peptide chain release factor 1 directs the termination of translation in response to the peptide chain termination codons UAG and UAA. This Desulfitobacterium hafniense (strain DSM 10664 / DCB-2) protein is Peptide chain release factor 1.